The following is a 346-amino-acid chain: Holliday junction branch migration complex subunit RuvB (346 aa).

The segment at 4–184 (TDRLIAPTAK…FGIVQRLEFY (181 aa)) is large ATPase domain (RuvB-L). ATP-binding positions include Arg-24, Gly-65, Lys-68, Thr-69, Thr-70, 131-133 (EDF), Arg-174, Tyr-184, and Arg-221. Residue Thr-69 coordinates Mg(2+). Residues 185-255 (NVKDLTHIVA…LADKALNMLN (71 aa)) are small ATPAse domain (RuvB-S). The head domain (RuvB-H) stretch occupies residues 258–346 (ERGFDHMDRR…QESQGGEGIA (89 aa)). DNA is bound by residues Arg-294, Arg-313, and Arg-318.

This sequence belongs to the RuvB family. Homohexamer. Forms an RuvA(8)-RuvB(12)-Holliday junction (HJ) complex. HJ DNA is sandwiched between 2 RuvA tetramers; dsDNA enters through RuvA and exits via RuvB. An RuvB hexamer assembles on each DNA strand where it exits the tetramer. Each RuvB hexamer is contacted by two RuvA subunits (via domain III) on 2 adjacent RuvB subunits; this complex drives branch migration. In the full resolvosome a probable DNA-RuvA(4)-RuvB(12)-RuvC(2) complex forms which resolves the HJ.

The protein resides in the cytoplasm. The enzyme catalyses ATP + H2O = ADP + phosphate + H(+). The RuvA-RuvB-RuvC complex processes Holliday junction (HJ) DNA during genetic recombination and DNA repair, while the RuvA-RuvB complex plays an important role in the rescue of blocked DNA replication forks via replication fork reversal (RFR). RuvA specifically binds to HJ cruciform DNA, conferring on it an open structure. The RuvB hexamer acts as an ATP-dependent pump, pulling dsDNA into and through the RuvAB complex. RuvB forms 2 homohexamers on either side of HJ DNA bound by 1 or 2 RuvA tetramers; 4 subunits per hexamer contact DNA at a time. Coordinated motions by a converter formed by DNA-disengaged RuvB subunits stimulates ATP hydrolysis and nucleotide exchange. Immobilization of the converter enables RuvB to convert the ATP-contained energy into a lever motion, pulling 2 nucleotides of DNA out of the RuvA tetramer per ATP hydrolyzed, thus driving DNA branch migration. The RuvB motors rotate together with the DNA substrate, which together with the progressing nucleotide cycle form the mechanistic basis for DNA recombination by continuous HJ branch migration. Branch migration allows RuvC to scan DNA until it finds its consensus sequence, where it cleaves and resolves cruciform DNA. The sequence is that of Holliday junction branch migration complex subunit RuvB from Cellvibrio japonicus (strain Ueda107) (Pseudomonas fluorescens subsp. cellulosa).